We begin with the raw amino-acid sequence, 889 residues long: Cytoplasmic aconitate hydratase (889 aa).

Residues glutamine 86 and 205–207 each bind substrate; that span reads DSH. [4Fe-4S] cluster-binding residues include cysteine 437, cysteine 503, and cysteine 506. Residues arginine 536, arginine 541, arginine 699, and 779-780 each bind substrate; that span reads SR.

The protein belongs to the aconitase/IPM isomerase family. As to quaternary structure, interacts (when associated with the 4Fe-4S) with FBXL5. Interacts with frataxin(81-210). It depends on [4Fe-4S] cluster as a cofactor.

The protein localises to the cytoplasm. Its subcellular location is the cytosol. It carries out the reaction citrate = D-threo-isocitrate. Its function is as follows. Bifunctional iron sensor that switches between 2 activities depending on iron availability. Iron deprivation, promotes its mRNA binding activity through which it regulates the expression of genes involved in iron uptake, sequestration and utilization. Binds to iron-responsive elements (IRES) in the untranslated region of target mRNAs preventing for instance the translation of ferritin and aminolevulinic acid synthase and stabilizing the transferrin receptor mRNA. In terms of biological role, conversely, when cellular iron levels are high, binds a 4Fe-4S cluster which precludes RNA binding activity and promotes the aconitase activity, the isomerization of citrate to isocitrate via cis-aconitate. The chain is Cytoplasmic aconitate hydratase (ACO1) from Oryctolagus cuniculus (Rabbit).